Reading from the N-terminus, the 436-residue chain is Serine--tRNA ligase (436 aa).

Positions 43 to 55 are enriched in basic and acidic residues; it reads TKSEQLKQKRNEV. The tract at residues 43–68 is disordered; that stretch reads TKSEQLKQKRNEVSDQIAQAKRNKED. 237–239 provides a ligand contact to L-serine; it reads TAE. 268 to 270 serves as a coordination point for ATP; sequence RSE. Glu-291 is an L-serine binding site. Residue 355-358 coordinates ATP; it reads EISS. Residue Ser-390 coordinates L-serine.

Belongs to the class-II aminoacyl-tRNA synthetase family. Type-1 seryl-tRNA synthetase subfamily. In terms of assembly, homodimer. The tRNA molecule binds across the dimer.

It localises to the cytoplasm. It catalyses the reaction tRNA(Ser) + L-serine + ATP = L-seryl-tRNA(Ser) + AMP + diphosphate + H(+). The enzyme catalyses tRNA(Sec) + L-serine + ATP = L-seryl-tRNA(Sec) + AMP + diphosphate + H(+). Its pathway is aminoacyl-tRNA biosynthesis; selenocysteinyl-tRNA(Sec) biosynthesis; L-seryl-tRNA(Sec) from L-serine and tRNA(Sec): step 1/1. Its function is as follows. Catalyzes the attachment of serine to tRNA(Ser). Is also able to aminoacylate tRNA(Sec) with serine, to form the misacylated tRNA L-seryl-tRNA(Sec), which will be further converted into selenocysteinyl-tRNA(Sec). The polypeptide is Serine--tRNA ligase (Lactobacillus johnsonii (strain CNCM I-12250 / La1 / NCC 533)).